A 164-amino-acid chain; its full sequence is MSTKTNSTKATSEKTDSLKTNRGTKSSAGYSEQNTPLGGCILADTPITFNENKPVTKVKVRNTGDRPIQVGSHFHFFEANRALEFDRAAAYGKRLNISSTTAIRFEPGDETEVPLIPFGGKQTLYGFNNLVDGWTGEGVVPNSERPDKLEAIRRAAERGFKSSK.

2 stretches are compositionally biased toward polar residues: residues 1–10 (MSTKTNSTKA) and 20–32 (TNRGTKSSAGYSE). Residues 1 to 32 (MSTKTNSTKATSEKTDSLKTNRGTKSSAGYSE) form a disordered region.

It belongs to the urease beta subunit family. Heterotrimer of UreA (gamma), UreB (beta) and UreC (alpha) subunits. Three heterotrimers associate to form the active enzyme.

The protein localises to the cytoplasm. It carries out the reaction urea + 2 H2O + H(+) = hydrogencarbonate + 2 NH4(+). It functions in the pathway nitrogen metabolism; urea degradation; CO(2) and NH(3) from urea (urease route): step 1/1. The sequence is that of Urease subunit beta from Yersinia enterocolitica serotype O:8 / biotype 1B (strain NCTC 13174 / 8081).